We begin with the raw amino-acid sequence, 154 residues long: Ribonuclease H (154 aa).

Residues 1 to 142 (MKQVDIFTDG…CDTIARGHAS (142 aa)) form the RNase H type-1 domain. Residues Asp-9, Glu-47, Asp-69, and Asp-134 each coordinate Mg(2+).

Belongs to the RNase H family. Monomer. Mg(2+) is required as a cofactor.

The protein localises to the cytoplasm. It carries out the reaction Endonucleolytic cleavage to 5'-phosphomonoester.. Its function is as follows. Endonuclease that specifically degrades the RNA of RNA-DNA hybrids. This Oleidesulfovibrio alaskensis (strain ATCC BAA-1058 / DSM 17464 / G20) (Desulfovibrio alaskensis) protein is Ribonuclease H.